The sequence spans 145 residues: Photosystem I reaction center subunit VI-2, chloroplastic (145 aa).

The N-terminal 50 residues, 1 to 50 (MASFATIAAVQPSAAVKGLGGSSLAGAKLFIKPSRQSFKTKSTRAGAVVA), are a transit peptide targeting the chloroplast. A helical transmembrane segment spans residues 102-118 (LLLKFLILGGGSLLTYV). The segment at 126–145 (VLPIKRGPQEPPKLGPRGKL) is disordered.

Belongs to the psaH family.

The protein localises to the plastid. It localises to the chloroplast thylakoid membrane. In terms of biological role, possible role could be the docking of the LHC I antenna complex to the core complex. The protein is Photosystem I reaction center subunit VI-2, chloroplastic (PSAH2) of Arabidopsis thaliana (Mouse-ear cress).